We begin with the raw amino-acid sequence, 342 residues long: Gibberellin cluster GA4 desaturase (342 aa).

Positions Pro127 to Ala183 are disordered.

Belongs to the asaB hydroxylase/desaturase family.

The protein operates within plant hormone biosynthesis; gibberellin biosynthesis. Functionally, GA4 desaturase; part of the gene cluster that mediates the biosynthesis of gibberellins (GAs), diterpenoids that may provide a selective advantage during infection of the preferred host plant, rice. Gibberellins (GAs) are diterpenoids and are synthesized via the mevalonate pathway. Biosynthesis of the major metabolite GA3 (gibberellic acid) from geranylgeranyl diphosphate (GGPP) requires 13 steps. The GGPP produced by the geranylgeranyl diphosphate synthase GGS2 is converted to ent-kaurene via ent-copalyldiphosphate in a two-step cyclization reaction performed by the bifunctional ent-copalyl diphosphate synthase/ent-kaurene synthase enzyme (CPS/KS). Ent-Kaurene is metabolized to GAs by a series of oxidation reactions catalyzed by cytochrome P450 monooxygenases. Cytochrome P450 monooxygenase P450-4 is an ent-kaurene oxidase that catalyzes the three oxidation steps between ent-kaurene and ent-kaurenoic acid. The highly multifunctional cytochrome P450 monooxygenase P450-1 then catalyzes four steps involving oxidation at two carbon atoms, in the main pathway from ent-kaurenoic acid to GA14 via GA12-aldehyde as well as producing kaurenolides and fujenoic acids as by-products. The cytochrome P450 monooxygenase P450-2 then converts GA14 to GA4 by removal of C-20. GA4 is further converted to GA7 by the GA4 desaturase DES via 1,2-desaturation before cytochrome P450 monooxygenase P450-3, a 13-hydroxylase, hydroxylates GA7 to GA3, the final product of the GA-biosynthetic pathway. In Gibberella fujikuroi (strain CBS 195.34 / IMI 58289 / NRRL A-6831) (Bakanae and foot rot disease fungus), this protein is Gibberellin cluster GA4 desaturase.